A 331-amino-acid polypeptide reads, in one-letter code: MSTSAPNTNELNSPVLETQPLAGDAALLHSSIADGYEEIIRAPFDYLLNLPGKDVRSKMISAFNQWLCIPADKLEVIKRIVMLLHNASLLIDDIQDSSKLRRGLPVSHHIFGVPQTINAANYAYFLAQQELPKLGDPKAFEIYTEELLSLHRGQGMDIYWREASKCPTEEEYFSMVSHKTGGLFRLAIRLMQLASDKNCDFVPLVNVLGVIFQIRDDYLNLQSHAYTVNKGFGEDLTEGKYSFPIIHSIRSDPTNIQLSSILKQRTTDVDVKLFAVECIKATGSFEHCKEKIAELVAEARQLIKEMGNSVPGSAEAVDRVLDLIGLEPESS.

Isopentenyl diphosphate is bound by residues Lys53, Arg56, and His85. Residues Asp92 and Asp96 each coordinate Mg(2+). Residue Arg101 participates in dimethylallyl diphosphate binding. Residue Arg102 coordinates isopentenyl diphosphate. Residues Lys179, Thr180, and Gln213 each coordinate dimethylallyl diphosphate. Asp216 lines the Mg(2+) pocket. 3 residues coordinate dimethylallyl diphosphate: Asn220, Lys230, and Lys240.

Belongs to the FPP/GGPP synthase family. Mg(2+) is required as a cofactor.

The enzyme catalyses isopentenyl diphosphate + dimethylallyl diphosphate = (2E)-geranyl diphosphate + diphosphate. The catalysed reaction is isopentenyl diphosphate + (2E)-geranyl diphosphate = (2E,6E)-farnesyl diphosphate + diphosphate. It catalyses the reaction isopentenyl diphosphate + (2E,6E)-farnesyl diphosphate = (2E,6E,10E)-geranylgeranyl diphosphate + diphosphate. Its pathway is secondary metabolite biosynthesis; terpenoid biosynthesis. Its function is as follows. Geranylgeranyl pyrophosphate synthase; part of the gene cluster that mediates the biosynthesis of the diterpenoid pyrones subglutinols A and B. The first step of the pathway is the synthesis of the alpha-pyrone moiety by the polyketide synthase dpmaA via condensation of one acetyl-CoA starter unit with 3 malonyl-CoA units and 2 methylations. The alpha-pyrone is then combined with geranylgeranyl pyrophosphate (GGPP) formed by the GGPP synthase dpmaD through the action of the prenyltransferase dpmaC to yield a linear alpha-pyrone diterpenoid. Subsequent steps in the diterpenoid pyrone biosynthetic pathway involve the decalin core formation, which is initiated by the epoxidation of the C10-C11 olefin by the FAD-dependent oxidoreductase dpmaE, and is followed by a cyclization cascade catalyzed by the terpene cyclase dpmaB. The dehydrogenase dpmaF is then involved in tetrahydrofuran (THF) ring formation at the C5 unit to complete the formation of subglutinols A and B. The polypeptide is Geranylgeranyl pyrophosphate synthase dpmaD (Metarhizium anisopliae (Entomophthora anisopliae)).